A 489-amino-acid polypeptide reads, in one-letter code: Dentin matrix acidic phosphoprotein 1 (489 aa).

An N-terminal signal peptide occupies residues Met-1–Ala-16. The tract at residues Tyr-22 to Tyr-489 is disordered. Residues Asp-82–Asn-100 are compositionally biased toward acidic residues. Residues Asp-123–Ala-138 show a composition bias toward low complexity. 2 stretches are compositionally biased toward basic and acidic residues: residues Ser-143–Ala-159 and Arg-217–Pro-227. The segment covering Asp-263 to Thr-274 has biased composition (polar residues). Over residues Glu-275 to Thr-287 the composition is skewed to basic and acidic residues. The segment covering Glu-316–Glu-332 has biased composition (low complexity). A Cell attachment site motif is present at residues Arg-334–Asp-336. Residue Asn-340 is glycosylated (N-linked (GlcNAc...) asparagine). Residues Asp-346 to Leu-358 are compositionally biased toward basic and acidic residues. Asn-378 carries N-linked (GlcNAc...) asparagine glycosylation. Residues Glu-386 to Ser-397 show a composition bias toward acidic residues. The span at Ser-398–Glu-419 shows a compositional bias: low complexity. Residues Gln-420–Ser-442 are compositionally biased toward basic and acidic residues. N-linked (GlcNAc...) asparagine glycosylation occurs at Asn-443. A compositionally biased stretch (basic and acidic residues) spans Glu-453–Gly-478. The span at Asp-479 to Tyr-489 shows a compositional bias: acidic residues.

Interacts with importin alpha. Post-translationally, phosphorylated in the cytosol and extracellular matrix and unphosphorylated in the nucleus. Phosphorylation is necessary for nucleocytoplasmic transport and may be catalyzed by a nuclear isoform of CK2 and can be augmented by calcium. Phosphorylated (in vitro) by FAM20C in the extracellular medium at sites within the S-x-E/pS motif. As to expression, expressed in tooth particularly in odontoblast and ameloblast.

It localises to the nucleus. It is found in the cytoplasm. The protein localises to the secreted. The protein resides in the extracellular space. Its subcellular location is the extracellular matrix. Its function is as follows. May have a dual function during osteoblast differentiation. In the nucleus of undifferentiated osteoblasts, unphosphorylated form acts as a transcriptional component for activation of osteoblast-specific genes like osteocalcin. During the osteoblast to osteocyte transition phase it is phosphorylated and exported into the extracellular matrix, where it regulates nucleation of hydroxyapatite. In Rattus norvegicus (Rat), this protein is Dentin matrix acidic phosphoprotein 1 (Dmp1).